The primary structure comprises 82 residues: METVRRIVKGTLLLGFCTGIGGDLWVLVAPGQERRLEMRMNYPEANPPMLAEAHKRNEMVLKVIEESAKTNENMARRSPWSS.

Residues M1 to R6 are Mitochondrial matrix-facing. A helical membrane pass occupies residues I7–A29. Over P30–S82 the chain is Mitochondrial intermembrane.

Belongs to the UQCC3 family. As to quaternary structure, associates with the ubiquinol-cytochrome c reductase complex (mitochondrial respiratory chain complex III or cytochrome b-c1 complex).

It is found in the mitochondrion inner membrane. In terms of biological role, required for the assembly of the ubiquinol-cytochrome c reductase complex (mitochondrial respiratory chain complex III or cytochrome b-c1 complex), mediating cytochrome b recruitment and probably stabilization within the complex. Thereby, plays an important role in ATP production by mitochondria. Cardiolipin-binding protein, it may also control the cardiolipin composition of mitochondria membranes and their morphology. The sequence is that of Ubiquinol-cytochrome-c reductase complex assembly factor 3 from Xenopus laevis (African clawed frog).